Consider the following 95-residue polypeptide: Protein TusB (95 aa).

The protein belongs to the DsrH/TusB family. Heterohexamer, formed by a dimer of trimers. The hexameric TusBCD complex contains 2 copies each of TusB, TusC and TusD. The TusBCD complex interacts with TusE.

Its subcellular location is the cytoplasm. Functionally, part of a sulfur-relay system required for 2-thiolation of 5-methylaminomethyl-2-thiouridine (mnm(5)s(2)U) at tRNA wobble positions. The sequence is that of Protein TusB from Klebsiella pneumoniae (strain 342).